Reading from the N-terminus, the 528-residue chain is Phosphoenolpyruvate carboxykinase (ATP) (528 aa).

The substrate site is built by arginine 56, tyrosine 192, and lysine 198. ATP-binding positions include lysine 198, histidine 217, and 233–241; that span reads GLSGTGKTT. Mn(2+) is bound by residues lysine 198 and histidine 217. Aspartate 254 is a binding site for Mn(2+). Residues glutamate 282, arginine 319, and threonine 444 each coordinate ATP. Arginine 319 contributes to the substrate binding site.

Belongs to the phosphoenolpyruvate carboxykinase (ATP) family. The cofactor is Mn(2+).

The protein localises to the cytoplasm. It carries out the reaction oxaloacetate + ATP = phosphoenolpyruvate + ADP + CO2. The protein operates within carbohydrate biosynthesis; gluconeogenesis. In terms of biological role, involved in the gluconeogenesis. Catalyzes the conversion of oxaloacetate (OAA) to phosphoenolpyruvate (PEP) through direct phosphoryl transfer between the nucleoside triphosphate and OAA. This Bacillus mycoides (strain KBAB4) (Bacillus weihenstephanensis) protein is Phosphoenolpyruvate carboxykinase (ATP).